Reading from the N-terminus, the 398-residue chain is Phosphoglycerate kinase (398 aa).

Substrate-binding positions include 21–23 (DFN), R36, 59–62 (HFGR), R117, and R150. Residues K200, E321, and 351–354 (GGDS) contribute to the ATP site.

This sequence belongs to the phosphoglycerate kinase family. Monomer.

Its subcellular location is the cytoplasm. The enzyme catalyses (2R)-3-phosphoglycerate + ATP = (2R)-3-phospho-glyceroyl phosphate + ADP. The protein operates within carbohydrate degradation; glycolysis; pyruvate from D-glyceraldehyde 3-phosphate: step 2/5. The polypeptide is Phosphoglycerate kinase (Wolbachia pipientis wMel).